Consider the following 558-residue polypeptide: Adenine deaminase (558 aa).

This sequence belongs to the metallo-dependent hydrolases superfamily. Adenine deaminase family. The cofactor is Mn(2+).

The enzyme catalyses adenine + H2O + H(+) = hypoxanthine + NH4(+). The protein is Adenine deaminase of Deinococcus deserti (strain DSM 17065 / CIP 109153 / LMG 22923 / VCD115).